The primary structure comprises 765 residues: Protein BCH2 (765 aa).

The tract at residues 1–31 (MSFLWGSTKSKKGKNKKAAGSLPSGVVPQQR) is disordered. A CHS5-binding region spans residues 735 to 765 (LECLSKNRNEACLAYERPLPDLPSTIKPLAD).

Belongs to the CHAPS family. Component of the CHS5/6 complex composed of the 4 CHAPS proteins BCH1, BCH2, BUD7, and CHS6 as well as at least CHS5 and GTP-bound ARF1. The complex interacts with the cargo protein CHS3.

It is found in the golgi apparatus. The protein resides in the trans-Golgi network membrane. In terms of biological role, member of the CHS5-ARF1P-binding proteins (CHAPS) which mediates export of specific cargo proteins, including chitin synthase CHS3. In Saccharomyces cerevisiae (strain ATCC 204508 / S288c) (Baker's yeast), this protein is Protein BCH2 (BCH2).